Here is a 298-residue protein sequence, read N- to C-terminus: Putative F-box and FNIP repeat-containing protein R286 (298 aa).

The F-box domain occupies 4-48; sequence LNVLESHVILHIIEFLPDHEKIKFMSTCKSLYEFRCHVTYNNFYV. FNIP repeat units lie at residues 124-165 and 255-297; these read FNKP…LGHN and WNFD…FISR.

This chain is Putative F-box and FNIP repeat-containing protein R286, found in Acanthamoeba polyphaga (Amoeba).